We begin with the raw amino-acid sequence, 37 residues long: Large ribosomal subunit protein bL36 (37 aa).

Belongs to the bacterial ribosomal protein bL36 family.

The protein is Large ribosomal subunit protein bL36 of Treponema pallidum (strain Nichols).